The following is a 122-amino-acid chain: S-adenosylmethionine decarboxylase proenzyme (122 aa).

Residue Ser-69 is the Schiff-base intermediate with substrate; via pyruvic acid of the active site. Position 69 is a pyruvic acid (Ser); by autocatalysis (Ser-69). His-74 serves as the catalytic Proton acceptor; for processing activity. Cys-89 acts as the Proton donor; for catalytic activity in catalysis.

The protein belongs to the prokaryotic AdoMetDC family. Type 1 subfamily. Heterotetramer of two alpha and two beta chains arranged as a dimer of alpha/beta heterodimers. Pyruvate is required as a cofactor. In terms of processing, is synthesized initially as an inactive proenzyme. Formation of the active enzyme involves a self-maturation process in which the active site pyruvoyl group is generated from an internal serine residue via an autocatalytic post-translational modification. Two non-identical subunits are generated from the proenzyme in this reaction, and the pyruvate is formed at the N-terminus of the alpha chain, which is derived from the carboxyl end of the proenzyme. The post-translation cleavage follows an unusual pathway, termed non-hydrolytic serinolysis, in which the side chain hydroxyl group of the serine supplies its oxygen atom to form the C-terminus of the beta chain, while the remainder of the serine residue undergoes an oxidative deamination to produce ammonia and the pyruvoyl group blocking the N-terminus of the alpha chain.

The catalysed reaction is S-adenosyl-L-methionine + H(+) = S-adenosyl 3-(methylsulfanyl)propylamine + CO2. It functions in the pathway amine and polyamine biosynthesis; S-adenosylmethioninamine biosynthesis; S-adenosylmethioninamine from S-adenosyl-L-methionine: step 1/1. Functionally, catalyzes the decarboxylation of S-adenosylmethionine to S-adenosylmethioninamine (dcAdoMet), the propylamine donor required for the synthesis of the polyamines spermine and spermidine from the diamine putrescine. The sequence is that of S-adenosylmethionine decarboxylase proenzyme from Sulfolobus acidocaldarius (strain ATCC 33909 / DSM 639 / JCM 8929 / NBRC 15157 / NCIMB 11770).